The chain runs to 394 residues: Actin-related protein 2-B (394 aa).

Residues Gly-160 to Gly-162, Arg-214 to Glu-218, and Gly-305 to Tyr-310 contribute to the ATP site.

Belongs to the actin family. ARP2 subfamily. As to quaternary structure, component of the Arp2/3 complex composed of actr2/arp2, actr3/arp3, arpc1b, arpc2, arpc3, arpc4 and arpc5.

It is found in the cytoplasm. The protein resides in the cytoskeleton. The protein localises to the cell projection. It localises to the nucleus. In terms of biological role, ATP-binding component of the Arp2/3 complex, a multiprotein complex that mediates actin polymerization upon stimulation by nucleation-promoting factor (NPF). The Arp2/3 complex mediates the formation of branched actin networks in the cytoplasm, providing the force for cell motility. Seems to contact the pointed end of the daughter actin filament. In addition to its role in the cytoplasmic cytoskeleton, the Arp2/3 complex also promotes actin polymerization in the nucleus, thereby regulating gene transcription and repair of damaged DNA. The Arp2/3 complex promotes homologous recombination (HR) repair in response to DNA damage by promoting nuclear actin polymerization, leading to drive motility of double-strand breaks (DSBs). The protein is Actin-related protein 2-B (actr2b) of Danio rerio (Zebrafish).